A 57-amino-acid chain; its full sequence is MKKVNLSSKWIISISLLIICDYVYLIRTNVNEQANAEATAHMHYKINNTKHSKGKLD.

The chain is Protein CgkB (cgkB) from Pseudoalteromonas carrageenovora (Alteromonas carrageenovora).